Consider the following 362-residue polypeptide: MSFNTFGHMFRVTTFGESHGVAIGCVVDGCPPMIPLTEADIQGDLDRRRPGQSRFTTQRQEPDQVKILSGVMAHPETGVQVTTGTPIGLLIENTDQRSKDYSEIKDKFRPGHADFTYEAKYGLRDYRGGGRSSARETATRVAAGAIARKVLPDVKVRGALVQMGPHKIDREKWDWDEVARNPFFCPDKDKAAFFETYLDGIRKSGSSIGAVLEIVAEGVPAGLGAPIYAKLDSDLAGAMMTINAVKGVEIGAGFGAAELTGEENADEMRTGNDGTRFLSNHAGGVLGGISTGQPVVVRFAVKPTSSILQPRLTVDRQGADTEIMTKGRHDPCVGIRAVPVGEAMMACVLADHFIRDRGQVGR.

NADP(+) is bound by residues Arg48 and Arg54. Residues 131–133, 243–244, Gly287, 302–306, and Arg328 each bind FMN; these read RSS, NA, and KPTSS.

This sequence belongs to the chorismate synthase family. Homotetramer. The cofactor is FMNH2.

The catalysed reaction is 5-O-(1-carboxyvinyl)-3-phosphoshikimate = chorismate + phosphate. Its pathway is metabolic intermediate biosynthesis; chorismate biosynthesis; chorismate from D-erythrose 4-phosphate and phosphoenolpyruvate: step 7/7. In terms of biological role, catalyzes the anti-1,4-elimination of the C-3 phosphate and the C-6 proR hydrogen from 5-enolpyruvylshikimate-3-phosphate (EPSP) to yield chorismate, which is the branch point compound that serves as the starting substrate for the three terminal pathways of aromatic amino acid biosynthesis. This reaction introduces a second double bond into the aromatic ring system. This is Chorismate synthase from Bradyrhizobium diazoefficiens (strain JCM 10833 / BCRC 13528 / IAM 13628 / NBRC 14792 / USDA 110).